Reading from the N-terminus, the 230-residue chain is Large ribosomal subunit protein uL1 (230 aa).

This sequence belongs to the universal ribosomal protein uL1 family. Part of the 50S ribosomal subunit.

Functionally, binds directly to 23S rRNA. The L1 stalk is quite mobile in the ribosome, and is involved in E site tRNA release. In terms of biological role, protein L1 is also a translational repressor protein, it controls the translation of the L11 operon by binding to its mRNA. In Oenococcus oeni (strain ATCC BAA-331 / PSU-1), this protein is Large ribosomal subunit protein uL1.